The chain runs to 191 residues: Potassium-transporting ATPase KdpC subunit (191 aa).

Residues 6–26 (PAILLFILLTLVTGGLYPLLT) traverse the membrane as a helical segment.

This sequence belongs to the KdpC family. As to quaternary structure, the system is composed of three essential subunits: KdpA, KdpB and KdpC.

Its subcellular location is the cell inner membrane. Its function is as follows. Part of the high-affinity ATP-driven potassium transport (or Kdp) system, which catalyzes the hydrolysis of ATP coupled with the electrogenic transport of potassium into the cytoplasm. This subunit acts as a catalytic chaperone that increases the ATP-binding affinity of the ATP-hydrolyzing subunit KdpB by the formation of a transient KdpB/KdpC/ATP ternary complex. This chain is Potassium-transporting ATPase KdpC subunit, found in Enterobacter sp. (strain 638).